The following is a 462-amino-acid chain: Stabilizer of axonemal microtubules 1 (462 aa).

Mn stretches follow at residues 30–64, 65–97, 98–131, 132–165, 166–199, 200–232, 233–266, 267–299, 300–332, 333–366, 367–400, and 401–434; these read KPCFFSEYTEKYPTYLSYVPRESFKPKLEYQKVNI, PMEGLSTTKRDFGTFNIVPVKHHLPEKATPIQD, EMDFLTTYNQHYNYCPANRVNPIKPRDNKHQCND, KMECVPTYKADYLPWNQQKRSSIRPPQSYRPASC, RFDHRTTHQDDYPIKNPVDTVSYKPPHGPKLCNI, PLESMTSYKSSYVAHPMEKRCVYEGEKYKPSEV, PFDSLTTHKDSYRGLIGEPAKTWKPAPNHPGLDI, PFPSNTEFREKFQPWPTPKIVPKESIAYIPPEG, KMDLLTTVQADYKCPNGVPAQSCRPVIHLKKSD, RFESSTTNREDFKHWANIRREPVKPNHQLKFSDE, PMEYMTTNRAHYVPHAPANTKSCKPTWSGPRVNI, and PLEGQTTYSTSFTPKEIQRCPASYPEPPGYIFDE.

This sequence belongs to the FAM154 family. In terms of assembly, associates with microtubules via the Mn regions.

It localises to the cytoplasm. Its subcellular location is the cytoskeleton. The protein resides in the microtubule organizing center. It is found in the centrosome. The protein localises to the centriole. It localises to the cilium basal body. Its subcellular location is the cilium axoneme. Functionally, may play a role in the regulation of cilium length. Stabilizes microtubules at low temperature. The protein is Stabilizer of axonemal microtubules 1 (Saxo1) of Rattus norvegicus (Rat).